The sequence spans 233 residues: Large ribosomal subunit protein uL1 (233 aa).

Belongs to the universal ribosomal protein uL1 family. As to quaternary structure, part of the 50S ribosomal subunit.

Binds directly to 23S rRNA. The L1 stalk is quite mobile in the ribosome, and is involved in E site tRNA release. In terms of biological role, protein L1 is also a translational repressor protein, it controls the translation of the L11 operon by binding to its mRNA. This Brucella melitensis biotype 1 (strain ATCC 23456 / CCUG 17765 / NCTC 10094 / 16M) protein is Large ribosomal subunit protein uL1.